Reading from the N-terminus, the 510-residue chain is Leucine-rich repeat-containing protein 53 (510 aa).

LRR repeat units lie at residues T34–L55, N58–G79, M82–T102, S108–N129, G132–G153, S158–P179, and Q182–L203. Residues N214–P271 enclose the LRRCT domain. A helical membrane pass occupies residues L294–F314.

The protein resides in the membrane. The sequence is that of Leucine-rich repeat-containing protein 53 (LRRC53) from Macaca fascicularis (Crab-eating macaque).